Reading from the N-terminus, the 251-residue chain is 5-oxoprolinase subunit A (251 aa).

Belongs to the LamB/PxpA family. In terms of assembly, forms a complex composed of PxpA, PxpB and PxpC.

The catalysed reaction is 5-oxo-L-proline + ATP + 2 H2O = L-glutamate + ADP + phosphate + H(+). In terms of biological role, catalyzes the cleavage of 5-oxoproline to form L-glutamate coupled to the hydrolysis of ATP to ADP and inorganic phosphate. The polypeptide is 5-oxoprolinase subunit A (Vibrio campbellii (strain ATCC BAA-1116)).